Consider the following 177-residue polypeptide: Adenine phosphoribosyltransferase (177 aa).

It belongs to the purine/pyrimidine phosphoribosyltransferase family. Homodimer.

The protein localises to the cytoplasm. The catalysed reaction is AMP + diphosphate = 5-phospho-alpha-D-ribose 1-diphosphate + adenine. The protein operates within purine metabolism; AMP biosynthesis via salvage pathway; AMP from adenine: step 1/1. Its function is as follows. Catalyzes a salvage reaction resulting in the formation of AMP, that is energically less costly than de novo synthesis. In Prosthecochloris aestuarii (strain DSM 271 / SK 413), this protein is Adenine phosphoribosyltransferase.